The following is a 513-amino-acid chain: Solute carrier family 2, facilitated glucose transporter member 7 (513 aa).

At 1–21 the chain is on the cytoplasmic side; sequence MEDKEIGTPLPLPHSEARLQP. Residues 22 to 42 traverse the membrane as a helical segment; that stretch reads TLVLTTLSAAFGSVFQYGYNI. Residues 43 to 78 lie on the Extracellular side of the membrane; it reads AVINTPHKVFKSFYNDTHFERHGTFMDESTLLLLWS. An N-linked (GlcNAc...) asparagine glycan is attached at Asn-57. Residues 79 to 99 traverse the membrane as a helical segment; that stretch reads CTVSMFPLGGLLGSLVVGLMV. Residues 100–107 lie on the Cytoplasmic side of the membrane; that stretch reads NKWGRKGT. Residues 108–128 traverse the membrane as a helical segment; that stretch reads LLINNVFAITSAVLMGVSKVA. At 129-138 the chain is on the extracellular side; sequence RAFELIILSR. Residues 139–159 traverse the membrane as a helical segment; that stretch reads VLVGICAGIAYSTLPMYLGEL. At 160–172 the chain is on the cytoplasmic side; sequence APQNLRGALGTMT. A helical membrane pass occupies residues 173 to 193; it reads EVFVIIGVLLAQIFSLQAILG. At 194-198 the chain is on the extracellular side; it reads NATGW. A helical membrane pass occupies residues 199–219; that stretch reads PILLALTGVPAVIQLLSLPFF. At 220-282 the chain is on the cytoplasmic side; sequence PESPRYTLIE…LNLFTFRPLR (63 aa). The chain crosses the membrane as a helical span at residues 283–303; that stretch reads WQLISIVVLMAGQQLSGINAV. Residues 295–296 and Asn-301 each bind D-glucose; that span reads QQ. Residues 304-322 are Extracellular-facing; that stretch reads NYYADVIYTSAGVDPTQSQ. A helical transmembrane segment spans residues 323–343; it reads YVTLGSGVINLVMTLVSAVII. Asn-332 serves as a coordination point for D-glucose. Over 344–351 the chain is Cytoplasmic; the sequence is ERLGRRIL. A helical membrane pass occupies residues 352-372; the sequence is LLSGYAICCSACLVLTVALLL. The Extracellular segment spans residues 373–380; it reads QSTAPELS. Residues 381 to 401 traverse the membrane as a helical segment; sequence YLSIVCVFSYIVGHSIGPSPV. The Cytoplasmic portion of the chain corresponds to 402–416; the sequence is PSVVRTEIVLQSSRT. Residues 417-437 traverse the membrane as a helical segment; it reads AAFTVDGAVHWLTNFIVGLTF. At 438–446 the chain is on the extracellular side; that stretch reads PSIQVAIGA. Residues 447–467 traverse the membrane as a helical segment; that stretch reads YSFLVFAGVCILTAAYIYVVI. Residues 468–513 are Cytoplasmic-facing; sequence PETKGRTFVEINCAFAKRNGVEFPEEKEVATAKPHTPSLPTKETAF. The segment at 494–513 is disordered; that stretch reads KEVATAKPHTPSLPTKETAF.

The protein belongs to the major facilitator superfamily. Sugar transporter (TC 2.A.1.1) family. Glucose transporter subfamily.

The protein resides in the cell membrane. It is found in the apical cell membrane. It catalyses the reaction D-glucose(out) = D-glucose(in). It carries out the reaction D-fructose(out) = D-fructose(in). In terms of biological role, probable sugar transporter. Even if its physiological substrate is subject to discussion, it is able to transport glucose and fructose. Does not transport galactose, 2-deoxy-d-glucose and xylose. The polypeptide is Solute carrier family 2, facilitated glucose transporter member 7 (Mus musculus (Mouse)).